The chain runs to 365 residues: tRNA/tmRNA (uracil-C(5))-methyltransferase (365 aa).

Residues Q189, Y217, N222, E238, and D298 each contribute to the S-adenosyl-L-methionine site. C323 acts as the Nucleophile in catalysis. Residue E357 is the Proton acceptor of the active site.

It belongs to the class I-like SAM-binding methyltransferase superfamily. RNA M5U methyltransferase family. TrmA subfamily.

It carries out the reaction uridine(54) in tRNA + S-adenosyl-L-methionine = 5-methyluridine(54) in tRNA + S-adenosyl-L-homocysteine + H(+). The enzyme catalyses uridine(341) in tmRNA + S-adenosyl-L-methionine = 5-methyluridine(341) in tmRNA + S-adenosyl-L-homocysteine + H(+). Its function is as follows. Dual-specificity methyltransferase that catalyzes the formation of 5-methyluridine at position 54 (m5U54) in all tRNAs, and that of position 341 (m5U341) in tmRNA (transfer-mRNA). The polypeptide is tRNA/tmRNA (uracil-C(5))-methyltransferase (Pasteurella multocida (strain Pm70)).